The sequence spans 283 residues: 4-hydroxybenzoate octaprenyltransferase (283 aa).

9 consecutive transmembrane segments (helical) span residues 16-36 (PIGT…AGAG), 40-60 (LRIV…GCVI), 85-105 (ISAT…FGLV), 108-128 (LNTE…LYPF), 135-155 (LPQI…FTAL), 160-180 (WFIA…YDTE), 204-224 (FDRL…GWIL), 226-246 (LITV…LFAY), and 263-283 (FLHN…HYWF).

Belongs to the UbiA prenyltransferase family. The cofactor is Mg(2+).

It localises to the cell inner membrane. The catalysed reaction is all-trans-octaprenyl diphosphate + 4-hydroxybenzoate = 4-hydroxy-3-(all-trans-octaprenyl)benzoate + diphosphate. Its pathway is cofactor biosynthesis; ubiquinone biosynthesis. Catalyzes the prenylation of para-hydroxybenzoate (PHB) with an all-trans polyprenyl group. Mediates the second step in the final reaction sequence of ubiquinone-8 (UQ-8) biosynthesis, which is the condensation of the polyisoprenoid side chain with PHB, generating the first membrane-bound Q intermediate 3-octaprenyl-4-hydroxybenzoate. The chain is 4-hydroxybenzoate octaprenyltransferase from Idiomarina loihiensis (strain ATCC BAA-735 / DSM 15497 / L2-TR).